A 119-amino-acid chain; its full sequence is Large ribosomal subunit protein bL20 (119 aa).

The protein belongs to the bacterial ribosomal protein bL20 family.

In terms of biological role, binds directly to 23S ribosomal RNA and is necessary for the in vitro assembly process of the 50S ribosomal subunit. It is not involved in the protein synthesizing functions of that subunit. This chain is Large ribosomal subunit protein bL20, found in Streptococcus suis (strain 98HAH33).